The sequence spans 231 residues: MRENRPVIALDFPTLEDVKAFLAKFPADEKLYVKIGMELYYAAGPEIIRYVKELGHSIFLDLKLHDIPNTVKSAMRVLSNLGVDMTNVHAAGGVEMMKAAREGLGDGPILIAVTQLTSTSEEQMRDFQNIQTTLQESVVHYAQKTAEAGLDGVVCSAHEVPKIKEATNQDFICLTPGIRPAGAAVGDQKRVMTPADAHQIGSDYIVVGRPITQAEDPVAAYHDIKAQWNDQ.

Residues Asp11, Lys34, 61 to 70 (DLKLHDIPNT), Thr117, Arg179, Gln188, Gly208, and Arg209 contribute to the substrate site. Catalysis depends on Lys63, which acts as the Proton donor.

It belongs to the OMP decarboxylase family. Type 1 subfamily. In terms of assembly, homodimer.

It carries out the reaction orotidine 5'-phosphate + H(+) = UMP + CO2. The protein operates within pyrimidine metabolism; UMP biosynthesis via de novo pathway; UMP from orotate: step 2/2. Functionally, catalyzes the decarboxylation of orotidine 5'-monophosphate (OMP) to uridine 5'-monophosphate (UMP). In Streptococcus thermophilus (strain ATCC BAA-491 / LMD-9), this protein is Orotidine 5'-phosphate decarboxylase.